The chain runs to 167 residues: MKLFTDIISNDEMCSDGYEMKLVEDVVYEVDAAKIVVSDGDVDIGANPSAEEAAEALENGAEQVINIVHSFRLQSTQFDKKSYLAYLKGYMKSVKAKLAESNPDRVPAFEKGAAAFAKKIVGSFNDWEFFTGESMDPEGMVALLNYREDGVTPYLVFWKDGLRETKI.

Residues 1 to 167 (MKLFTDIISN…WKDGLRETKI (167 aa)) enclose the TCTP domain.

This sequence belongs to the TCTP family.

The protein localises to the cytoplasm. It localises to the cytoskeleton. Its function is as follows. Involved in protein synthesis. Involved in microtubule stabilization. The sequence is that of Translationally-controlled tumor protein homolog from Mycosarcoma maydis (Corn smut fungus).